We begin with the raw amino-acid sequence, 134 residues long: MKLSGFVSILVLFGLLARVQGPSLADLLFPRRCPRFREECEHQERDLCTRDRDCPKKEKCCVFNCGKKCLNPQQDICSLPKDSGYCMAYFRRWWFNKENSTCQVFIYGGCQGNNNNFQSQSICQNACEKKSSLT.

The signal sequence occupies residues 1-21; sequence MKLSGFVSILVLFGLLARVQG. In terms of domain architecture, WAP spans 26–73; the sequence is DLLFPRRCPRFREECEHQERDLCTRDRDCPKKEKCCVFNCGKKCLNPQ. 7 cysteine pairs are disulfide-bonded: C33-C61, C40-C65, C48-C60, C54-C69, C77-C127, C86-C110, and C102-C123. Residues 77–127 form the BPTI/Kunitz inhibitor domain; that stretch reads CSLPKDSGYCMAYFRRWWFNKENSTCQVFIYGGCQGNNNNFQSQSICQNAC. The interval 102–133 is interaction with SEMG1; that stretch reads CQVFIYGGCQGNNNNFQSQSICQNACEKKSSL. Residues 117-133 form an interaction with LTF region; that stretch reads FQSQSICQNACEKKSSL.

As to quaternary structure, monomer. Homodimer. Homomultimers. Interacts (via C-terminus) with SEMG1 (via 164-283 AA). Interacts with LTF. Found in a complex with LTF, CLU, EPPIN and SEMG1. In terms of tissue distribution, expressed in differentiated spermatogonia in testis. Expressed in spermatogonia cell lines GC-1 spg and GC-2spd(ts) as well as in the Leydig tumor cell line MLTC-1 (at protein level). Expressed specifically in epididymis and testis. Expressed predominantly on the postacrosomal region of mouse spermatozoa, in Sertoli cells, Leydig cells, and round spermatids in the testis, and in the principal cells of the cauda epididymidis epithelium.

It localises to the secreted. The protein localises to the cell surface. Functionally, serine protease inhibitor that plays an essential role in male reproduction and fertility. Modulates the hydrolysis of SEMG1 by KLK3/PSA (a serine protease), provides antimicrobial protection for spermatozoa in the ejaculate coagulum, and binds SEMG1 thereby inhibiting sperm motility. The protein is Eppin (Eppin) of Mus musculus (Mouse).